The sequence spans 104 residues: Nucleoid-associated protein Amuc_1227 (104 aa).

Belongs to the YbaB/EbfC family. As to quaternary structure, homodimer.

The protein localises to the cytoplasm. It is found in the nucleoid. In terms of biological role, binds to DNA and alters its conformation. May be involved in regulation of gene expression, nucleoid organization and DNA protection. The protein is Nucleoid-associated protein Amuc_1227 of Akkermansia muciniphila (strain ATCC BAA-835 / DSM 22959 / JCM 33894 / BCRC 81048 / CCUG 64013 / CIP 107961 / Muc).